The sequence spans 491 residues: Probable cysteine proteinase 024R (491 aa).

Active-site residues include cysteine 132, histidine 325, and asparagine 355. A helical membrane pass occupies residues 467–487; the sequence is ALDLALLVLPALLIVIVVLIG.

Belongs to the peptidase C1 family.

The protein localises to the membrane. Probable cysteine protease. The polypeptide is Probable cysteine proteinase 024R (Invertebrate iridescent virus 3 (IIV-3)).